Here is a 123-residue protein sequence, read N- to C-terminus: Ribosome-binding factor A (123 aa).

Belongs to the RbfA family. Monomer. Binds 30S ribosomal subunits, but not 50S ribosomal subunits or 70S ribosomes.

It is found in the cytoplasm. One of several proteins that assist in the late maturation steps of the functional core of the 30S ribosomal subunit. Associates with free 30S ribosomal subunits (but not with 30S subunits that are part of 70S ribosomes or polysomes). Required for efficient processing of 16S rRNA. May interact with the 5'-terminal helix region of 16S rRNA. This Dechloromonas aromatica (strain RCB) protein is Ribosome-binding factor A.